The sequence spans 201 residues: Lipopolysaccharide core heptose(II)-phosphate phosphatase (201 aa).

Positions 1-35 (MLAFTLRFIKNKRYLATLAGALVIIAGLTSQHAWS) are cleaved as a signal peptide.

It belongs to the phosphoglycerate mutase family. Ais subfamily.

The protein localises to the periplasm. Its pathway is bacterial outer membrane biogenesis; lipopolysaccharide metabolism. Its function is as follows. Catalyzes the dephosphorylation of heptose(II) of the outer membrane lipopolysaccharide core. The protein is Lipopolysaccharide core heptose(II)-phosphate phosphatase of Salmonella paratyphi A (strain AKU_12601).